A 677-amino-acid chain; its full sequence is Protein hook (677 aa).

The Calponin-homology (CH) domain maps to 6-123; it reads NEMYYSLLEW…RLLQLVLGCA (118 aa). 2 coiled-coil regions span residues 135-436 and 478-588; these read EIMC…KCGH and QTAL…AKEV.

This sequence belongs to the hook family. As to quaternary structure, homodimer. Interacts with microtubules via its N-terminus.

It is found in the cytoplasm. It localises to the cytoskeleton. Its subcellular location is the endosome. The protein localises to the synapse. Its function is as follows. Involved in endocytic trafficking by stabilizing organelles of the endocytic pathway. Probably acts as a cytoskeletal linker protein required to tether endosome vesicles to the cytoskeleton. Involved in modulation of endocytosis at stages required for down-regulation of membrane proteins that control synapse size. Not involved in synaptic vesicle recycling. Required in R7 cells for boss endocytosis into multivesicular bodies (MVBs). Has a role in regulating adult longevity. The polypeptide is Protein hook (Drosophila persimilis (Fruit fly)).